We begin with the raw amino-acid sequence, 255 residues long: Glutamate racemase (255 aa).

Residues 7–8 (DS) and 39–40 (YG) each bind substrate. Catalysis depends on Cys-70, which acts as the Proton donor/acceptor. 71-72 (NT) lines the substrate pocket. The Proton donor/acceptor role is filled by Cys-181. Residue 182–183 (TH) coordinates substrate.

Belongs to the aspartate/glutamate racemases family.

The catalysed reaction is L-glutamate = D-glutamate. The protein operates within cell wall biogenesis; peptidoglycan biosynthesis. Functionally, provides the (R)-glutamate required for cell wall biosynthesis. The polypeptide is Glutamate racemase (Helicobacter pylori (strain ATCC 700392 / 26695) (Campylobacter pylori)).